The chain runs to 258 residues: Mediator of RNA polymerase II transcription subunit 7 (258 aa).

2 disordered regions span residues 1-39 (MLPG…PPPH) and 202-243 (EKET…PPSV). Positions 203-217 (KETEEDEEMKEDDEE) are enriched in acidic residues. Positions 220 to 229 (STSSSEGNQK) are enriched in polar residues.

This sequence belongs to the Mediator complex subunit 7 family. In terms of assembly, component of the Mediator complex.

The protein resides in the nucleus. Component of the Mediator complex, a coactivator involved in the regulated transcription of nearly all RNA polymerase II-dependent genes. Mediator functions as a bridge to convey information from gene-specific regulatory proteins to the basal RNA polymerase II transcription machinery. Mediator is recruited to promoters by direct interactions with regulatory proteins and serves as a scaffold for the assembly of a functional preinitiation complex with RNA polymerase II and the general transcription factors. The sequence is that of Mediator of RNA polymerase II transcription subunit 7 (let-49) from Caenorhabditis briggsae.